A 233-amino-acid chain; its full sequence is MAKRPTKRAVVLLSGGLDSTTCLAVARRDGFEAHCLSVDYGQRHKGELARARRLSRALGAADHRVVKVDLSAFGGSALTDRAIAVPKGRSGRRRAAEIPVTYVPARNTVLLALALAHAETLGAEDVYVGVNAIDYSGYPDCRPAFLRAFERLATVATKAGVEGRPLRIHAPLLRLTKAGIVRLGTSLGVPYRVTLSCYDPVRGRACGACDACVLRRKGFAEAGIPDPTLYVQK.

13 to 23 contacts ATP; sequence LSGGLDSTTCL. Residues Cys-197, Cys-206, Cys-209, and Cys-212 each coordinate Zn(2+).

The protein belongs to the QueC family. Zn(2+) is required as a cofactor.

The enzyme catalyses 7-carboxy-7-deazaguanine + NH4(+) + ATP = 7-cyano-7-deazaguanine + ADP + phosphate + H2O + H(+). Its pathway is purine metabolism; 7-cyano-7-deazaguanine biosynthesis. Its function is as follows. Catalyzes the ATP-dependent conversion of 7-carboxy-7-deazaguanine (CDG) to 7-cyano-7-deazaguanine (preQ(0)). The sequence is that of 7-cyano-7-deazaguanine synthase from Anaeromyxobacter sp. (strain Fw109-5).